A 324-amino-acid chain; its full sequence is Probable UDP-sugar transporter protein SLC35A4 (324 aa).

The Cytoplasmic segment spans residues 1–18 (MSVEDGGVPGLGRPRKAR). Residues 19 to 39 (WTLMLLLSTAMYGAHAPLLAL) traverse the membrane as a helical segment. At 40–52 (CHVDGRVPFRPSS) the chain is on the lumenal side. Residues 53–73 (AVLLTELTKLLLCALSLLVGW) traverse the membrane as a helical segment. Residues 74–85 (QAWPQGTPPWRQ) are Cytoplasmic-facing. A helical membrane pass occupies residues 86 to 106 (AAPFALSALLYGANNNLVIYL). Topologically, residues 107 to 141 (QRYMDPSTYQVLSNLKIGSTALFYCLCLRHRLSAR) are lumenal. A helical membrane pass occupies residues 142–162 (QGLALLLLMAAGACYAAGGLQ). Over 163 to 180 (DPGTTLPGPPSAAATSPM) the chain is Cytoplasmic. The helical transmembrane segment at 181-201 (PLHITPLGLLLLILYCLISGL) threads the bilayer. The Lumenal portion of the chain corresponds to 202–214 (SSVYTELLMKRQR). A helical membrane pass occupies residues 215-235 (LPLALQNLFLYSFGVLLNLGL). Residues 236 to 248 (HAGGGPGPGLLEG) are Cytoplasmic-facing. A helical transmembrane segment spans residues 249–271 (FSGWMALVVLSQALNGLLMSAVM). Residues 272–275 (KHGS) are Lumenal-facing. The helical transmembrane segment at 276–298 (SITRLFVVSCSLVVNAVLSAALL) threads the bilayer. Topologically, residues 299 to 324 (RLQLTAAFFLATLLIGLAVRLYYGSR) are cytoplasmic.

It belongs to the nucleotide-sugar transporter family. SLC35A subfamily. Found in a complex with SLC35A2 and SLC35A3.

The protein localises to the golgi apparatus membrane. The catalysed reaction is CDP-L-ribitol(in) + CDP(out) = CDP-L-ribitol(out) + CDP(in). Its function is as follows. Mediates the transport of CDP-ribitol. Does not exhibit CMP-sialic acid, UDP-galactose and UDP-N-acetylglucosamine transport activity. This chain is Probable UDP-sugar transporter protein SLC35A4, found in Bos taurus (Bovine).